The chain runs to 168 residues: Crossover junction endodeoxyribonuclease RuvC (168 aa).

Catalysis depends on residues Asp9, Glu70, and Asp145. Positions 9, 70, and 145 each coordinate Mg(2+).

This sequence belongs to the RuvC family. Homodimer which binds Holliday junction (HJ) DNA. The HJ becomes 2-fold symmetrical on binding to RuvC with unstacked arms; it has a different conformation from HJ DNA in complex with RuvA. In the full resolvosome a probable DNA-RuvA(4)-RuvB(12)-RuvC(2) complex forms which resolves the HJ. Requires Mg(2+) as cofactor.

It localises to the cytoplasm. It catalyses the reaction Endonucleolytic cleavage at a junction such as a reciprocal single-stranded crossover between two homologous DNA duplexes (Holliday junction).. Functionally, the RuvA-RuvB-RuvC complex processes Holliday junction (HJ) DNA during genetic recombination and DNA repair. Endonuclease that resolves HJ intermediates. Cleaves cruciform DNA by making single-stranded nicks across the HJ at symmetrical positions within the homologous arms, yielding a 5'-phosphate and a 3'-hydroxyl group; requires a central core of homology in the junction. The consensus cleavage sequence is 5'-(A/T)TT(C/G)-3'. Cleavage occurs on the 3'-side of the TT dinucleotide at the point of strand exchange. HJ branch migration catalyzed by RuvA-RuvB allows RuvC to scan DNA until it finds its consensus sequence, where it cleaves and resolves the cruciform DNA. In Chlamydia caviae (strain ATCC VR-813 / DSM 19441 / 03DC25 / GPIC) (Chlamydophila caviae), this protein is Crossover junction endodeoxyribonuclease RuvC.